A 36-amino-acid chain; its full sequence is Photosystem I reaction center subunit VIII (36 aa).

The helical transmembrane segment at 9-29 threads the bilayer; that stretch reads IFVPLVGLVFPAIAMASLSLY.

This sequence belongs to the PsaI family.

The protein localises to the plastid. It localises to the chloroplast thylakoid membrane. Its function is as follows. May help in the organization of the PsaL subunit. The sequence is that of Photosystem I reaction center subunit VIII from Phalaenopsis aphrodite subsp. formosana (Moth orchid).